The following is a 427-amino-acid chain: Peptidase B (427 aa).

Mn(2+) is bound by residues lysine 195 and aspartate 200. The active site involves lysine 207. Residues aspartate 218, aspartate 277, and glutamate 279 each coordinate Mn(2+). Arginine 281 is an active-site residue.

Belongs to the peptidase M17 family. As to quaternary structure, homohexamer. Mn(2+) serves as cofactor.

Its subcellular location is the cytoplasm. The catalysed reaction is Release of an N-terminal amino acid, Xaa, from a peptide or arylamide. Xaa is preferably Glu or Asp but may be other amino acids, including Leu, Met, His, Cys and Gln.. Its function is as follows. Probably plays an important role in intracellular peptide degradation. The chain is Peptidase B from Escherichia coli (strain SE11).